Here is a 547-residue protein sequence, read N- to C-terminus: Chaperonin GroEL 2 (547 aa).

Residues 29–32 (TLGP), 86–90 (DGTTT), Gly-418, 482–484 (NAA), and Asp-498 contribute to the ATP site.

Belongs to the chaperonin (HSP60) family. As to quaternary structure, forms a cylinder of 14 subunits composed of two heptameric rings stacked back-to-back. Interacts with the co-chaperonin GroES.

It localises to the cytoplasm. It carries out the reaction ATP + H2O + a folded polypeptide = ADP + phosphate + an unfolded polypeptide.. Together with its co-chaperonin GroES, plays an essential role in assisting protein folding. The GroEL-GroES system forms a nano-cage that allows encapsulation of the non-native substrate proteins and provides a physical environment optimized to promote and accelerate protein folding. The polypeptide is Chaperonin GroEL 2 (Corynebacterium efficiens (strain DSM 44549 / YS-314 / AJ 12310 / JCM 11189 / NBRC 100395)).